The following is a 61-amino-acid chain: Double gene block protein 1 (61 aa).

The segment at 1-45 (MDIESEVPVVGKQMLAGNRGKQKTRRSVAKDAIRKPASDSTNGGN) is disordered. The tract at residues 17–35 (GNRGKQKTRRSVAKDAIRK) is RNA-binding. Residues 28–37 (VAKDAIRKPA) are compositionally biased toward basic and acidic residues.

Belongs to the carmovirus double gene block protein 1 family. In terms of assembly, homodimer.

In terms of biological role, cell-to-cell movement. Displays RNA-binding activity. The sequence is that of Double gene block protein 1 from Carnation mottle virus (CarMV).